The following is a 475-amino-acid chain: UDP-N-acetylmuramate--L-alanine ligase (475 aa).

114-120 (GTHGKTT) contributes to the ATP binding site.

Belongs to the MurCDEF family.

It localises to the cytoplasm. The enzyme catalyses UDP-N-acetyl-alpha-D-muramate + L-alanine + ATP = UDP-N-acetyl-alpha-D-muramoyl-L-alanine + ADP + phosphate + H(+). The protein operates within cell wall biogenesis; peptidoglycan biosynthesis. Functionally, cell wall formation. The protein is UDP-N-acetylmuramate--L-alanine ligase of Bartonella tribocorum (strain CIP 105476 / IBS 506).